The following is a 316-amino-acid chain: Methionyl-tRNA formyltransferase (316 aa).

112 to 115 (GLLP) is a (6S)-5,6,7,8-tetrahydrofolate binding site.

The protein belongs to the Fmt family.

It carries out the reaction L-methionyl-tRNA(fMet) + (6R)-10-formyltetrahydrofolate = N-formyl-L-methionyl-tRNA(fMet) + (6S)-5,6,7,8-tetrahydrofolate + H(+). In terms of biological role, attaches a formyl group to the free amino group of methionyl-tRNA(fMet). The formyl group appears to play a dual role in the initiator identity of N-formylmethionyl-tRNA by promoting its recognition by IF2 and preventing the misappropriation of this tRNA by the elongation apparatus. This Chlamydia muridarum (strain MoPn / Nigg) protein is Methionyl-tRNA formyltransferase.